The chain runs to 123 residues: Small ribosomal subunit protein uS13 (123 aa).

The span at 99-113 (RGQRTHTNARTRKGG) shows a compositional bias: basic residues. A disordered region spans residues 99 to 123 (RGQRTHTNARTRKGGSRLAVAAKKK).

The protein belongs to the universal ribosomal protein uS13 family. As to quaternary structure, part of the 30S ribosomal subunit. Forms a loose heterodimer with protein S19. Forms two bridges to the 50S subunit in the 70S ribosome.

Located at the top of the head of the 30S subunit, it contacts several helices of the 16S rRNA. In the 70S ribosome it contacts the 23S rRNA (bridge B1a) and protein L5 of the 50S subunit (bridge B1b), connecting the 2 subunits; these bridges are implicated in subunit movement. Contacts the tRNAs in the A and P-sites. This chain is Small ribosomal subunit protein uS13, found in Anaplasma phagocytophilum (strain HZ).